The following is a 354-amino-acid chain: Coiled-coil domain-containing protein 86 (354 aa).

Residues 1-354 (MDTPLRRSRR…QPPQRPATKV (354 aa)) are disordered. Phosphoserine is present on residues Ser-18 and Ser-24. Positions 31 to 44 (VLVEFESNPKETGE) are enriched in basic and acidic residues. Residues Ser-47 and Ser-53 each carry the phosphoserine modification. Over residues 49–58 (PGLGSPSRQP) the composition is skewed to low complexity. A Phosphothreonine modification is found at Thr-60. 8 positions are modified to phosphoserine: Ser-61, Ser-64, Ser-75, Ser-86, Ser-105, Ser-108, Ser-123, and Ser-183. Polar residues predominate over residues 97-107 (FPQNQPESSPE). Over residues 199–211 (PAREGPAPKKREG) the composition is skewed to basic and acidic residues. Ser-212 and Ser-213 each carry phosphoserine. The span at 232–248 (GKPKSGRVWKDRSKKRF) shows a compositional bias: basic residues. 2 stretches are compositionally biased toward basic and acidic residues: residues 267-289 (DRQE…ERRR) and 297-311 (AENL…RKAE). A coiled-coil region spans residues 274–317 (AKDFARHLEEEKERRRQEKKKRRAENLRRRLENERKAEIVQVIR). A compositionally biased stretch (basic residues) spans 320–330 (AKLKRAKKKQL). A Citrulline modification is found at Arg-336.

In terms of processing, citrullinated by PADI4.

Its subcellular location is the nucleus. It is found in the chromosome. The protein resides in the nucleolus. Required for proper chromosome segregation during mitosis and error-free mitotic progression. This is Coiled-coil domain-containing protein 86 from Bos taurus (Bovine).